Reading from the N-terminus, the 471-residue chain is Ribosomal protein uS12 methylthiotransferase RimO (471 aa).

The MTTase N-terminal domain maps to 2-122; sequence IKVSLISLGC…VAPIIQEIYA (121 aa). Residues Cys11, Cys47, Cys84, Cys166, Cys170, and Cys173 each coordinate [4Fe-4S] cluster. The 244-residue stretch at 152–395 folds into the Radical SAM core domain; the sequence is LTPKHFAYVK…MALQKQIAAD (244 aa). The region spanning 398 to 458 is the TRAM domain; it reads KTYVGRTLRV…DYDLLALPPG (61 aa).

This sequence belongs to the methylthiotransferase family. RimO subfamily. The cofactor is [4Fe-4S] cluster.

The protein resides in the cytoplasm. It catalyses the reaction L-aspartate(89)-[ribosomal protein uS12]-hydrogen + (sulfur carrier)-SH + AH2 + 2 S-adenosyl-L-methionine = 3-methylsulfanyl-L-aspartate(89)-[ribosomal protein uS12]-hydrogen + (sulfur carrier)-H + 5'-deoxyadenosine + L-methionine + A + S-adenosyl-L-homocysteine + 2 H(+). Functionally, catalyzes the methylthiolation of an aspartic acid residue of ribosomal protein uS12. In Opitutus terrae (strain DSM 11246 / JCM 15787 / PB90-1), this protein is Ribosomal protein uS12 methylthiotransferase RimO.